The chain runs to 250 residues: Cobalt transport protein CbiM (250 aa).

The first 24 residues, 1–24 (MKYWGTALLGAFCVFFFTPNTAYA), serve as a signal peptide directing secretion. 6 helical membrane-spanning segments follow: residues 32-52 (LPAG…FWGI), 67-87 (MLLG…IPSV), 99-119 (LGAI…VLLF), 122-142 (LLLA…MGVM), 161-181 (VAVF…TSLQ), and 203-223 (IFAI…VFVF).

It belongs to the CbiM family. In terms of assembly, forms an energy-coupling factor (ECF) transporter complex composed of an ATP-binding protein (A component, CbiO), a transmembrane protein (T component, CbiQ) and 2 possible substrate-capture proteins (S components, CbiM and CbiN) of unknown stoichimetry.

The protein resides in the cell membrane. Its pathway is cofactor biosynthesis; adenosylcobalamin biosynthesis. Functionally, part of the energy-coupling factor (ECF) transporter complex CbiMNOQ involved in cobalt import. This is Cobalt transport protein CbiM from Desulforamulus reducens (strain ATCC BAA-1160 / DSM 100696 / MI-1) (Desulfotomaculum reducens).